A 212-amino-acid chain; its full sequence is 3-isopropylmalate dehydratase small subunit (212 aa).

It belongs to the LeuD family. LeuD type 1 subfamily. Heterodimer of LeuC and LeuD.

It catalyses the reaction (2R,3S)-3-isopropylmalate = (2S)-2-isopropylmalate. The protein operates within amino-acid biosynthesis; L-leucine biosynthesis; L-leucine from 3-methyl-2-oxobutanoate: step 2/4. In terms of biological role, catalyzes the isomerization between 2-isopropylmalate and 3-isopropylmalate, via the formation of 2-isopropylmaleate. The chain is 3-isopropylmalate dehydratase small subunit from Thioalkalivibrio sulfidiphilus (strain HL-EbGR7).